The following is a 209-amino-acid chain: Transmembrane domain-containing protein TMIGD3 (209 aa).

The N-terminal stretch at 1 to 15 (MEFLLLLSLALFSDA) is a signal peptide. The chain crosses the membrane as a helical span at residues 152 to 172 (SILIICILITSLGIIFIISHL). The disordered stretch occupies residues 179–201 (QRNREVTGKSISRNPQASQGPSM). Over residues 187–201 (KSISRNPQASQGPSM) the composition is skewed to polar residues.

The protein localises to the membrane. This chain is Transmembrane domain-containing protein TMIGD3 (Tmigd3), found in Mus musculus (Mouse).